We begin with the raw amino-acid sequence, 486 residues long: dTDP-4-dehydro-6-deoxy-alpha-D-glucopyranose 2,3-dehydratase (486 aa).

DTDP-4-dehydro-6-deoxy-alpha-D-glucose is bound by residues Trp66, 149 to 153 (TRSNY), Ser187, Trp304, Arg367, 383 to 385 (QCS), 388 to 389 (NY), and 421 to 424 (EGGR).

This sequence belongs to the hexose 2,3-dehydratase family. In terms of assembly, homodimer.

The catalysed reaction is dTDP-4-dehydro-6-deoxy-alpha-D-glucose = dTDP-3,4-didehydro-2,6-dideoxy-alpha-D-glucose + H2O. Its function is as follows. Involved in the biosynthesis of forosamine ((4-dimethylamino)-2,3,4,6-tetradeoxy-alpha-D-threo-hexopyranose), a highly deoxygenated sugar component of several bioactive natural products such as the insecticidal spinosyns A and D. Catalyzes the removal of the hydroxyl group at position C-2 of the hexose ring of dTDP-4-dehydro-6-deoxy-alpha-D-glucopyranose, and the oxidation of the hydroxyl group at position C-3 to form a carbonyl functionality. The product of the reaction, dTDP-2,6-dideoxy-D-glycero-hex-2-enos-4-ulose, is a highly unstable diketosugar, which spontaneously forms dTDP-3,4-didehydro-2,6-dideoxy-alpha-D-glucose. The sequence is that of dTDP-4-dehydro-6-deoxy-alpha-D-glucopyranose 2,3-dehydratase from Saccharopolyspora spinosa.